The sequence spans 67 residues: DNA-directed RNA polymerase subunit omega (67 aa).

Belongs to the RNA polymerase subunit omega family. In terms of assembly, the RNAP catalytic core consists of 2 alpha, 1 beta, 1 beta' and 1 omega subunit. When a sigma factor is associated with the core the holoenzyme is formed, which can initiate transcription.

The catalysed reaction is RNA(n) + a ribonucleoside 5'-triphosphate = RNA(n+1) + diphosphate. In terms of biological role, promotes RNA polymerase assembly. Latches the N- and C-terminal regions of the beta' subunit thereby facilitating its interaction with the beta and alpha subunits. This Delftia acidovorans (strain DSM 14801 / SPH-1) protein is DNA-directed RNA polymerase subunit omega.